The chain runs to 339 residues: Ketol-acid reductoisomerase (NADP(+)) (339 aa).

The region spanning methionine 1–threonine 182 is the KARI N-terminal Rossmann domain. NADP(+) contacts are provided by residues tyrosine 24–glutamine 27, arginine 48, serine 51, threonine 53, and aspartate 83–glutamine 86. The active site involves histidine 108. Glycine 134 is a binding site for NADP(+). The 146-residue stretch at threonine 183–isoleucine 328 folds into the KARI C-terminal knotted domain. Residues aspartate 191, glutamate 195, glutamate 227, and glutamate 231 each coordinate Mg(2+). Position 252 (serine 252) interacts with substrate.

This sequence belongs to the ketol-acid reductoisomerase family. It depends on Mg(2+) as a cofactor.

It catalyses the reaction (2R)-2,3-dihydroxy-3-methylbutanoate + NADP(+) = (2S)-2-acetolactate + NADPH + H(+). The catalysed reaction is (2R,3R)-2,3-dihydroxy-3-methylpentanoate + NADP(+) = (S)-2-ethyl-2-hydroxy-3-oxobutanoate + NADPH + H(+). Its pathway is amino-acid biosynthesis; L-isoleucine biosynthesis; L-isoleucine from 2-oxobutanoate: step 2/4. The protein operates within amino-acid biosynthesis; L-valine biosynthesis; L-valine from pyruvate: step 2/4. In terms of biological role, involved in the biosynthesis of branched-chain amino acids (BCAA). Catalyzes an alkyl-migration followed by a ketol-acid reduction of (S)-2-acetolactate (S2AL) to yield (R)-2,3-dihydroxy-isovalerate. In the isomerase reaction, S2AL is rearranged via a Mg-dependent methyl migration to produce 3-hydroxy-3-methyl-2-ketobutyrate (HMKB). In the reductase reaction, this 2-ketoacid undergoes a metal-dependent reduction by NADPH to yield (R)-2,3-dihydroxy-isovalerate. This chain is Ketol-acid reductoisomerase (NADP(+)), found in Rhodopseudomonas palustris (strain BisA53).